The primary structure comprises 90 residues: UPF0184 protein (90 aa).

Positions 16 to 78 (DETKEEMVEL…QSLETEQNTE (63 aa)) form a coiled coil. Positions 57–90 (SQQARQELQAERQSLETEQNTEPSTKSDQEQKKQ) are disordered. Basic and acidic residues predominate over residues 81–90 (TKSDQEQKKQ).

The protein belongs to the UPF0184 (EST00098) family.

The protein is UPF0184 protein of Branchiostoma floridae (Florida lancelet).